The chain runs to 1330 residues: MDFPAAQPKPAADGKIIYYPPGVKETTDKITNDEVVKRLKMVVKTFMDMDQDSEDEKQQYLPLALHLASEFFLRNPNKDVRLLVACCLADIFRIYAPEAPYTSHDKLKDIFLFITRQLKGLEDTKSPQFNRYFYLLENLAWVKSYNICFELEDCNEIFIQLFRTLFSVINNSHNQKVQMHMLDLMSSIIMEGDGVTQELLDSILINLIPAHKNLNKQAFDLAKVLLKRTVQTIEPCIANFFNQVLVLGKSSVSDLSEHVFDLILELFAIDPHLLLSVMPQLEFKLKSNDGEERLAVVRLLAKLFGSKDSDLATQNRPLWQCFLGRFNDIHVPVRLESVKFASHCLMNHPDLAKDLTEYLKVRSHDPEEAIRHDVIVTIITAGKRDLSLVNDQLLGFVRERTLDKRWRVRKEAMMGLAQLYKKYCLHAEAGKDAAEKVSWIKDKLLHIYYQNSIDDKLLVEKIFAQYLVPHNLETEERMKCLYYLYASLDPNAVKALNEMWKCQNMLRSHVRELLDLHKQPTSEANSAAMFGKLMTIAKNLPDPGKAQDFVKKFNQVLGDDEKLRSQLELLISPTCSCKQADVCVREIARKLANPKQPTNPFLEMVKFLLERIAPVHIDSEAISALVKLMNKSIEGTADDEEEGVSPDTAIRAGLELLKVLSFTHPTSFHSAETYESLLQCLRMEDDKVAEAAIQIFRNTGHKIETDLPQIRSTLIPILHQKAKRGTPHQAKQAVHCIHAIFSNKEVQLAQIFEPLSRSLNADVPEQLITPLVSLGHISMLAPDQFASPMKSVVANFVVKDLLMNDRSTGEKNGKLWSPDEEVSPEVLAKVQAIKLLVRWLLGMKNNQSKSANSTLRLLSAMLVSEGDLTEQKRISKSDMSRLRLAAGSAIMKLAQEPCYHEIITPEQFQLCALVINDECYQVRQIFAQKLHKALVKLLLPLEYMAIFALCAKDPVKERRAHARQCLLKNISIRREYIKQNPMANEKLLSLLPEYVVPYMIHLLAHDPDFTKPQDVDQLRDVKECLWFMLEVLMTKNENNSHAFMKKMAENIKLTRDAQSPDEPKANEKLYTVCDVALCVINSKSALCNADSPKDPVLPTKFFTQPEKDFSNDRNYISEETRVLLLTGKPKPTGVLDTVNKPLSATGRRPYIRTTGSETGSNISVNSELSSSAGNRSREQSSDISETGVSENDENPVRIISVTPAKTEPVKNKEINSDQATQGNSTERGKKRTATASGTENIHQKAEENNADETGPSLAAKTRRGRPPKPEPQGTTAKNEETNKPPVRGRKRAAASQESPGSLEAGNAKAPKQQDTAKKPAAAQRQIDLQR.

Residues 387 to 423 (SLVNDQLLGFVRERTLDKRWRVRKEAMMGLAQLYKKY) form an HEAT repeat. The interval 1138–1330 (VNKPLSATGR…AAQRQIDLQR (193 aa)) is disordered. Residues 1160 to 1171 (SNISVNSELSSS) are compositionally biased toward low complexity. Over residues 1216–1225 (SDQATQGNST) the composition is skewed to polar residues.

It belongs to the PDS5 family. Interacts with the cohesin complex. Binds chromatin in a cohesin-dependent manner.

The protein localises to the nucleus. May regulate sister chromatid cohesion during mitosis and couple it to DNA replication. The sequence is that of Sister chromatid cohesion protein PDS5 homolog A from Gallus gallus (Chicken).